A 304-amino-acid polypeptide reads, in one-letter code: Quinolinate synthase (304 aa).

Residues histidine 23 and serine 40 each coordinate iminosuccinate. Residue cysteine 85 coordinates [4Fe-4S] cluster. Residues 111–113 and serine 128 contribute to the iminosuccinate site; that span reads YIN. Cysteine 171 contributes to the [4Fe-4S] cluster binding site. Residues 197–199 and threonine 214 contribute to the iminosuccinate site; that span reads HPE. Residue cysteine 259 coordinates [4Fe-4S] cluster.

Belongs to the quinolinate synthase family. Type 2 subfamily. [4Fe-4S] cluster is required as a cofactor.

The protein resides in the cytoplasm. It carries out the reaction iminosuccinate + dihydroxyacetone phosphate = quinolinate + phosphate + 2 H2O + H(+). The protein operates within cofactor biosynthesis; NAD(+) biosynthesis; quinolinate from iminoaspartate: step 1/1. Catalyzes the condensation of iminoaspartate with dihydroxyacetone phosphate to form quinolinate. This is Quinolinate synthase from Clostridioides difficile (strain 630) (Peptoclostridium difficile).